Reading from the N-terminus, the 224-residue chain is UPF0758 protein mma_2551 (224 aa).

An MPN domain is found at Ser102–Leu224. Zn(2+)-binding residues include His173, His175, and Asp186. The JAMM motif signature appears at His173–Asp186.

This sequence belongs to the UPF0758 family.

This is UPF0758 protein mma_2551 from Janthinobacterium sp. (strain Marseille) (Minibacterium massiliensis).